A 207-amino-acid chain; its full sequence is Large ribosomal subunit protein uL4 (207 aa).

The tract at residues 49–78 is disordered; it reads HAVKNRSAVSGGGRKPWRQKGTGRARQGSI.

The protein belongs to the universal ribosomal protein uL4 family. Part of the 50S ribosomal subunit.

In terms of biological role, one of the primary rRNA binding proteins, this protein initially binds near the 5'-end of the 23S rRNA. It is important during the early stages of 50S assembly. It makes multiple contacts with different domains of the 23S rRNA in the assembled 50S subunit and ribosome. Its function is as follows. Forms part of the polypeptide exit tunnel. This chain is Large ribosomal subunit protein uL4, found in Streptococcus uberis (strain ATCC BAA-854 / 0140J).